Reading from the N-terminus, the 467-residue chain is Methylenetetrahydrofolate--tRNA-(uracil-5-)-methyltransferase TrmFO (467 aa).

11 to 16 (GAGLAG) provides a ligand contact to FAD.

It belongs to the MnmG family. TrmFO subfamily. FAD serves as cofactor.

The protein resides in the cytoplasm. The catalysed reaction is uridine(54) in tRNA + (6R)-5,10-methylene-5,6,7,8-tetrahydrofolate + NADH + H(+) = 5-methyluridine(54) in tRNA + (6S)-5,6,7,8-tetrahydrofolate + NAD(+). The enzyme catalyses uridine(54) in tRNA + (6R)-5,10-methylene-5,6,7,8-tetrahydrofolate + NADPH + H(+) = 5-methyluridine(54) in tRNA + (6S)-5,6,7,8-tetrahydrofolate + NADP(+). In terms of biological role, catalyzes the folate-dependent formation of 5-methyl-uridine at position 54 (M-5-U54) in all tRNAs. The chain is Methylenetetrahydrofolate--tRNA-(uracil-5-)-methyltransferase TrmFO from Prochlorococcus marinus (strain MIT 9303).